The chain runs to 85 residues: Glutaredoxin 1 (85 aa).

A Glutaredoxin domain is found at 1-85 (MQTVIFGRSG…AAWVKENLDA (85 aa)). Cys-11 and Cys-14 are oxidised to a cystine.

It belongs to the glutaredoxin family. In terms of assembly, monomer.

Its function is as follows. The disulfide bond functions as an electron carrier in the glutathione-dependent synthesis of deoxyribonucleotides by the enzyme ribonucleotide reductase. In addition, it is also involved in reducing some disulfides in a coupled system with glutathione reductase. The polypeptide is Glutaredoxin 1 (grxA) (Shigella flexneri).